A 351-amino-acid polypeptide reads, in one-letter code: Small ribosomal subunit biogenesis GTPase RsgA (351 aa).

Basic residues predominate over residues 1-12 (MAKHKLSKGQQR). The tract at residues 1–37 (MAKHKLSKGQQRRVRENHQRRLKKQDNKPEMDDNQLG) is disordered. Over residues 13–31 (RVRENHQRRLKKQDNKPEM) the composition is skewed to basic and acidic residues. Residues 112–274 (YYDGIKPIAA…VIDSPGVREF (163 aa)) form the CP-type G domain. GTP contacts are provided by residues 160–163 (NKID) and 214–222 (GQSGVGKSS). The Zn(2+) site is built by cysteine 298, cysteine 303, histidine 305, and cysteine 311.

This sequence belongs to the TRAFAC class YlqF/YawG GTPase family. RsgA subfamily. As to quaternary structure, monomer. Associates with 30S ribosomal subunit, binds 16S rRNA. Zn(2+) is required as a cofactor.

It localises to the cytoplasm. Functionally, one of several proteins that assist in the late maturation steps of the functional core of the 30S ribosomal subunit. Helps release RbfA from mature subunits. May play a role in the assembly of ribosomal proteins into the subunit. Circularly permuted GTPase that catalyzes slow GTP hydrolysis, GTPase activity is stimulated by the 30S ribosomal subunit. This is Small ribosomal subunit biogenesis GTPase RsgA from Photorhabdus laumondii subsp. laumondii (strain DSM 15139 / CIP 105565 / TT01) (Photorhabdus luminescens subsp. laumondii).